A 376-amino-acid chain; its full sequence is Lipoyl synthase 1, chloroplastic (376 aa).

Polar residues predominate over residues 1–13; the sequence is MIEQSLSKPSFSL. Disordered stretches follow at residues 1-25 and 47-75; these read MIEQSLSKPSFSLSIPIPQPPKSKS and IDAKHPQISSINSNGGGKMGSYTGRDPNV. A chloroplast-targeting transit peptide spans 1 to 35; that stretch reads MIEQSLSKPSFSLSIPIPQPPKSKSSFLCSYSKIR. Residues Cys-107, Cys-112, Cys-118, Cys-138, Cys-142, Cys-145, and Ser-353 each coordinate [4Fe-4S] cluster. One can recognise a Radical SAM core domain in the interval 121–342; that stretch reads GGGDGIATAT…KEYGESIGFR (222 aa).

The protein belongs to the radical SAM superfamily. Lipoyl synthase family. It depends on [4Fe-4S] cluster as a cofactor.

The protein resides in the plastid. It is found in the chloroplast. It carries out the reaction [[Fe-S] cluster scaffold protein carrying a second [4Fe-4S](2+) cluster] + N(6)-octanoyl-L-lysyl-[protein] + 2 oxidized [2Fe-2S]-[ferredoxin] + 2 S-adenosyl-L-methionine + 4 H(+) = [[Fe-S] cluster scaffold protein] + N(6)-[(R)-dihydrolipoyl]-L-lysyl-[protein] + 4 Fe(3+) + 2 hydrogen sulfide + 2 5'-deoxyadenosine + 2 L-methionine + 2 reduced [2Fe-2S]-[ferredoxin]. It participates in protein modification; protein lipoylation via endogenous pathway; protein N(6)-(lipoyl)lysine from octanoyl-[acyl-carrier-protein]: step 2/2. Functionally, catalyzes the radical-mediated insertion of two sulfur atoms into the C-6 and C-8 positions of the octanoyl moiety bound to the lipoyl domains of lipoate-dependent enzymes, thereby converting the octanoylated domains into lipoylated derivatives. This chain is Lipoyl synthase 1, chloroplastic, found in Populus trichocarpa (Western balsam poplar).